The sequence spans 157 residues: S-ribosylhomocysteine lyase (157 aa).

Residues histidine 54, histidine 58, and cysteine 124 each coordinate Fe cation.

It belongs to the LuxS family. As to quaternary structure, homodimer. The cofactor is Fe cation.

The catalysed reaction is S-(5-deoxy-D-ribos-5-yl)-L-homocysteine = (S)-4,5-dihydroxypentane-2,3-dione + L-homocysteine. Its function is as follows. Involved in the synthesis of autoinducer 2 (AI-2) which is secreted by bacteria and is used to communicate both the cell density and the metabolic potential of the environment. The regulation of gene expression in response to changes in cell density is called quorum sensing. Catalyzes the transformation of S-ribosylhomocysteine (RHC) to homocysteine (HC) and 4,5-dihydroxy-2,3-pentadione (DPD). In Lacticaseibacillus paracasei (strain ATCC 334 / BCRC 17002 / CCUG 31169 / CIP 107868 / KCTC 3260 / NRRL B-441) (Lactobacillus paracasei), this protein is S-ribosylhomocysteine lyase.